Here is a 228-residue protein sequence, read N- to C-terminus: MKSTRPFHPTPVITIDGPTASGKGTVAALVAAHLGFHLLDSGALYRLAALASIRYQVEPDDADALASLVDGLHITFREGCAQLDGVDVSDEIRAEAVGNRASAIAVHASVRAALVARQRAFRKTPGLVADGRDMGTVIFPDAVLKVFLTASVEARAARRHKQLMQKGFSANMDNLLQDLRERDARDSNRAAAPLKPAADAKPLDTSALTIEQSVEQVLAWYRELGQPA.

Gly17–Thr25 is a binding site for ATP.

It belongs to the cytidylate kinase family. Type 1 subfamily.

Its subcellular location is the cytoplasm. The catalysed reaction is CMP + ATP = CDP + ADP. The enzyme catalyses dCMP + ATP = dCDP + ADP. This Burkholderia pseudomallei (strain 1106a) protein is Cytidylate kinase.